Reading from the N-terminus, the 716-residue chain is Polyribonucleotide nucleotidyltransferase (716 aa).

Residues aspartate 480 and aspartate 486 each coordinate Mg(2+). Residues 547-606 (PKIVQLQIDIDKISLVIGSTGKTVKAITDEFEVKVQIEQNGKIILFGDDDFKMQKAKERI) form the KH domain. The 96-residue stretch at 616–711 (GEIYEGTVKK…KFGKIDLEIV (96 aa)) folds into the S1 motif domain.

Belongs to the polyribonucleotide nucleotidyltransferase family. Mg(2+) serves as cofactor.

The protein resides in the cytoplasm. The catalysed reaction is RNA(n+1) + phosphate = RNA(n) + a ribonucleoside 5'-diphosphate. In terms of biological role, involved in mRNA degradation. Catalyzes the phosphorolysis of single-stranded polyribonucleotides processively in the 3'- to 5'-direction. The chain is Polyribonucleotide nucleotidyltransferase from Borreliella burgdorferi (strain ATCC 35210 / DSM 4680 / CIP 102532 / B31) (Borrelia burgdorferi).